We begin with the raw amino-acid sequence, 155 residues long: Ferredoxin-6, chloroplastic (155 aa).

The N-terminal 58 residues, 1 to 58, are a transit peptide targeting the chloroplast; sequence MSTATAPRLPAPRSGASYHYQTTAAPAANTLSFAGHARQAARASGPRLSSRFVASAAA. Residues 61–152 form the 2Fe-2S ferredoxin-type domain; sequence HKVKLVGPDG…DCVIHTHKEE (92 aa). [2Fe-2S] cluster-binding residues include Cys-98, Cys-103, Cys-106, and Cys-136.

It belongs to the 2Fe2S plant-type ferredoxin family. The cofactor is [2Fe-2S] cluster.

The protein resides in the plastid. It is found in the chloroplast. Functionally, ferredoxins are iron-sulfur proteins that transfer electrons in a wide variety of metabolic reactions. The protein is Ferredoxin-6, chloroplastic (FDX6) of Zea mays (Maize).